A 154-amino-acid polypeptide reads, in one-letter code: Ribonuclease H (154 aa).

The 142-residue stretch at 1–142 (MRKQVEIFTD…CDELARAAAG (142 aa)) folds into the RNase H type-1 domain. Positions 10, 48, 70, and 134 each coordinate Mg(2+).

Belongs to the RNase H family. In terms of assembly, monomer. Requires Mg(2+) as cofactor.

It is found in the cytoplasm. It catalyses the reaction Endonucleolytic cleavage to 5'-phosphomonoester.. Endonuclease that specifically degrades the RNA of RNA-DNA hybrids. The chain is Ribonuclease H from Pectobacterium carotovorum subsp. carotovorum (strain PC1).